The sequence spans 189 residues: Elongation factor P (189 aa).

Lys34 is modified (N6-(3,6-diaminohexanoyl)-5-hydroxylysine).

The protein belongs to the elongation factor P family. May be beta-lysylated on the epsilon-amino group of Lys-34 by the combined action of EpmA and EpmB, and then hydroxylated on the C5 position of the same residue by EpmC (if this protein is present). Lysylation is critical for the stimulatory effect of EF-P on peptide-bond formation. The lysylation moiety may extend toward the peptidyltransferase center and stabilize the terminal 3-CCA end of the tRNA. Hydroxylation of the C5 position on Lys-34 may allow additional potential stabilizing hydrogen-bond interactions with the P-tRNA.

It localises to the cytoplasm. Its pathway is protein biosynthesis; polypeptide chain elongation. Functionally, involved in peptide bond synthesis. Alleviates ribosome stalling that occurs when 3 or more consecutive Pro residues or the sequence PPG is present in a protein, possibly by augmenting the peptidyl transferase activity of the ribosome. Modification of Lys-34 is required for alleviation. The chain is Elongation factor P from Francisella tularensis subsp. novicida (strain U112).